Consider the following 317-residue polypeptide: Glycerol-3-phosphate dehydrogenase [NAD(P)+] (317 aa).

4 residues coordinate NADPH: Ser-14, Phe-15, Arg-35, and Lys-109. Positions 109 and 137 each coordinate sn-glycerol 3-phosphate. Ala-141 lines the NADPH pocket. Sn-glycerol 3-phosphate is bound by residues Lys-192, Asp-248, Ser-258, Arg-259, and Asn-260. The Proton acceptor role is filled by Lys-192. Arg-259 is a binding site for NADPH. The NADPH site is built by Leu-283 and Glu-285.

Belongs to the NAD-dependent glycerol-3-phosphate dehydrogenase family.

The protein localises to the cytoplasm. The enzyme catalyses sn-glycerol 3-phosphate + NAD(+) = dihydroxyacetone phosphate + NADH + H(+). It catalyses the reaction sn-glycerol 3-phosphate + NADP(+) = dihydroxyacetone phosphate + NADPH + H(+). The protein operates within membrane lipid metabolism; glycerophospholipid metabolism. Functionally, catalyzes the reduction of the glycolytic intermediate dihydroxyacetone phosphate (DHAP) to sn-glycerol 3-phosphate (G3P), the key precursor for phospholipid synthesis. The chain is Glycerol-3-phosphate dehydrogenase [NAD(P)+] from Rickettsia akari (strain Hartford).